Consider the following 434-residue polypeptide: Beta-enolase (434 aa).

At Ala-2 the chain carries N-acetylalanine. Thr-72 carries the post-translational modification Phosphothreonine. 2 positions are modified to phosphoserine: Ser-83 and Ser-157. Substrate is bound by residues His-158 and Glu-167. Position 176 is a phosphoserine (Ser-176). Residue Thr-205 is modified to Phosphothreonine. Catalysis depends on Glu-210, which acts as the Proton donor. Thr-229 is subject to Phosphothreonine. Position 236 is a phosphotyrosine (Tyr-236). Mg(2+) is bound at residue Asp-245. Ser-263 carries the phosphoserine modification. Substrate contacts are provided by Glu-293 and Asp-318. Positions 293 and 318 each coordinate Mg(2+). Lys-343 (proton acceptor) is an active-site residue. Substrate contacts are provided by residues 370–373 (SHRS) and Lys-394.

Belongs to the enolase family. As to quaternary structure, mammalian enolase is composed of 3 isozyme subunits, alpha, beta and gamma, which can form homodimers or heterodimers which are cell-type and development-specific. Interacts with PNKD. Requires Mg(2+) as cofactor.

It localises to the cytoplasm. It carries out the reaction (2R)-2-phosphoglycerate = phosphoenolpyruvate + H2O. The protein operates within carbohydrate degradation; glycolysis; pyruvate from D-glyceraldehyde 3-phosphate: step 4/5. In terms of biological role, glycolytic enzyme that catalyzes the conversion of 2-phosphoglycerate to phosphoenolpyruvate. Appears to have a function in striated muscle development and regeneration. The chain is Beta-enolase (ENO3) from Bos taurus (Bovine).